The chain runs to 164 residues: MERFLENAMYASRWLLAPVYFGLSLALIALALKFFQEIIHVLPNIFSMAESDLILVLLSLVDMTLVGGLLVMVMFSGYENFVSQLDISENKEKLNWLGKMDATSLKNKVAASIVAISSIHLLRVFMDAKNVPDNKLMWYVIIHLTFVLSAFVMGYLDRLTRHNH.

Transmembrane regions (helical) follow at residues 15 to 35 (LLAP…LKFF), 53 to 73 (LILV…LVMV), and 136 to 156 (LMWY…MGYL).

This sequence belongs to the UPF0114 family.

Its subcellular location is the cell membrane. This is UPF0114 protein YqhA from Escherichia coli O6:H1 (strain CFT073 / ATCC 700928 / UPEC).